Consider the following 315-residue polypeptide: uncharacterized protein (315 aa).

The Cytoplasmic segment spans residues 1 to 38 (MDVLLSLPQPELFKTTVIPFLANRNIIKSEAILSNLHS). A helical membrane pass occupies residues 39–59 (IFYVAIFYHIWFLFGKWILFP). Topologically, residues 60-101 (HLVKWKLDYDQKHNVKKDEKTTSERQAQHYKKKYTSLINQSS) are lumenal. Residues 95–302 (SLINQSSVHL…MVSVAAKVLK (208 aa)) enclose the TLC domain. Residues 102–122 (VHLISLLQSIVVLYYSLKFLL) form a helical membrane-spanning segment. Over 123–144 (DPKASAEPYQTSHSRVFTENRD) the chain is Cytoplasmic. A helical membrane pass occupies residues 145–165 (TQVICIFAIGYFVWDIYISTM). Residues 166 to 170 (YSTFP) lie on the Lumenal side of the membrane. The chain crosses the membrane as a helical span at residues 171-190 (FVVHGIISTVVFCIGLKPYI). At 191 to 225 (QYYAPVFLMFELSNPSLNFRWFGIKFLPQKSKFCS) the chain is on the cytoplasmic side. A helical membrane pass occupies residues 226-246 (LLLLLNNLTLMVVFFAARIAW). Topologically, residues 247-264 (GWFQIGKLCYDFYQVRNE) are lumenal. Residues 265-285 (PGFLVFDTIVILAGNFVLDIL) traverse the membrane as a helical segment. The Cytoplasmic segment spans residues 286-315 (NVIWFSTMVSVAAKVLKKGESVDKVTKNEQ).

It localises to the endoplasmic reticulum membrane. This is an uncharacterized protein from Saccharomyces cerevisiae (strain ATCC 204508 / S288c) (Baker's yeast).